The primary structure comprises 223 residues: DNA mismatch repair protein MutH (223 aa).

Belongs to the MutH family.

The protein localises to the cytoplasm. Functionally, sequence-specific endonuclease that cleaves unmethylated GATC sequences. It is involved in DNA mismatch repair. In Haemophilus influenzae (strain PittGG), this protein is DNA mismatch repair protein MutH.